We begin with the raw amino-acid sequence, 362 residues long: MGFTTSSVTDAIAALDERSKEIFRRIVEGYLENGEPLGSRNLSRLLPMSLSPASVRNVMSDLEELGLIYSPHISAGRLPTQIGLRFFVDAFMQVGDLSAEDRATIDRQVRGSNRDQPMESVMTEASRMLSGISRGAGLVITSKNDPVLKHVEFIRLEPTKALAVLVGDHDQVENRIIELPAGITSSQLTEAANFLNAHMTGQTLPDLRRQLLTLKESVRHELDTLSHELVERGIAVWSGGEDEGKPTQLIVRGHANLLTEVGGAEDLDRLRLLFDDLEKKDSLIEILNLAESGPGVRIFIGSENKLFSLSGSSLIVAPYRDDDDRIIGAVGVIGPTRLNYARIVPMVDYTAQLFSRMSRPGL.

It belongs to the HrcA family.

In terms of biological role, negative regulator of class I heat shock genes (grpE-dnaK-dnaJ and groELS operons). Prevents heat-shock induction of these operons. This is Heat-inducible transcription repressor HrcA from Rhizobium rhizogenes (strain K84 / ATCC BAA-868) (Agrobacterium radiobacter).